The chain runs to 157 residues: Transcription elongation factor GreA (157 aa).

It belongs to the GreA/GreB family.

In terms of biological role, necessary for efficient RNA polymerase transcription elongation past template-encoded arresting sites. The arresting sites in DNA have the property of trapping a certain fraction of elongating RNA polymerases that pass through, resulting in locked ternary complexes. Cleavage of the nascent transcript by cleavage factors such as GreA or GreB allows the resumption of elongation from the new 3'terminus. GreA releases sequences of 2 to 3 nucleotides. The polypeptide is Transcription elongation factor GreA (Brucella abortus (strain S19)).